A 392-amino-acid polypeptide reads, in one-letter code: Stilbene synthase 5 (392 aa).

55–58 (KFNR) is a binding site for substrate. Residue Cys164 is part of the active site. Substrate contacts are provided by residues Leu267 and 305-307 (GGP).

Belongs to the thiolase-like superfamily. Chalcone/stilbene synthases family. In terms of assembly, homodimer.

Its subcellular location is the cytoplasm. The catalysed reaction is 4-coumaroyl-CoA + 3 malonyl-CoA + 3 H(+) = trans-resveratrol + 4 CO2 + 4 CoA. It participates in phytoalexin biosynthesis; 3,4',5-trihydroxystilbene biosynthesis; 3,4',5-trihydroxystilbene from trans-4-coumarate: step 2/2. Mediates resistance to pathogens which are sensitive to stilbenes. This Vitis vinifera (Grape) protein is Stilbene synthase 5.